The primary structure comprises 954 residues: Leucine--tRNA ligase (954 aa).

A 'HIGH' region motif is present at residues 40–51 (PYPSGAGLHVGH). Residues 729–733 (KMSKS) carry the 'KMSKS' region motif. Lys732 is a binding site for ATP.

Belongs to the class-I aminoacyl-tRNA synthetase family.

The protein localises to the cytoplasm. It carries out the reaction tRNA(Leu) + L-leucine + ATP = L-leucyl-tRNA(Leu) + AMP + diphosphate. This Flavobacterium johnsoniae (strain ATCC 17061 / DSM 2064 / JCM 8514 / BCRC 14874 / CCUG 350202 / NBRC 14942 / NCIMB 11054 / UW101) (Cytophaga johnsonae) protein is Leucine--tRNA ligase.